Here is a 386-residue protein sequence, read N- to C-terminus: Eukaryotic translation initiation factor 3 subunit M (386 aa).

The PCI domain maps to 181–343 (NSELASKVMI…RKVHISSTMH (163 aa)).

This sequence belongs to the eIF-3 subunit M family. As to quaternary structure, component of the eukaryotic translation initiation factor 3 (eIF-3) complex.

The protein resides in the cytoplasm. Functionally, component of the eukaryotic translation initiation factor 3 (eIF-3) complex, which is involved in protein synthesis of a specialized repertoire of mRNAs and, together with other initiation factors, stimulates binding of mRNA and methionyl-tRNAi to the 40S ribosome. The eIF-3 complex specifically targets and initiates translation of a subset of mRNAs involved in cell proliferation. In Culex quinquefasciatus (Southern house mosquito), this protein is Eukaryotic translation initiation factor 3 subunit M.